A 752-amino-acid chain; its full sequence is Myotubularin-related protein 10 (752 aa).

A Myotubularin phosphatase domain is found at 206 to 636; it reads FDCSSDWDRE…SHLSVWKLYF (431 aa). Positions 652-683 form a coiled coil; that stretch reads TAFHKLSVLTDEIEMLQNQLRQYKGAAGTANT.

It belongs to the protein-tyrosine phosphatase family. Non-receptor class myotubularin subfamily.

This Danio rerio (Zebrafish) protein is Myotubularin-related protein 10 (mtmr10).